Consider the following 227-residue polypeptide: MSAVKTLEAVARDRVGKGAARAVRRQGQIPAVIYGGGQPPQSIAVDLIRTRTLIYAGGFKTTLFEINAGGKKVRAIPRDFQLDPVTGVPLHVDFLRVVSGQTVTVEVPVHFVNEDAAPGIKKLGGTLNIVAHTLSLEVAPDQIPDAIEVDLTGRAIGDVIHVSDIKIPAGTYTGEATDPVANIVPPTVLGAEVEAEEAAIAEAQSAEAAEEKAEESAEDEKKDGEEA.

Residues 199–227 (AIAEAQSAEAAEEKAEESAEDEKKDGEEA) are disordered. Residues 209–227 (AEEKAEESAEDEKKDGEEA) show a composition bias toward basic and acidic residues.

Belongs to the bacterial ribosomal protein bL25 family. CTC subfamily. Part of the 50S ribosomal subunit; part of the 5S rRNA/L5/L18/L25 subcomplex. Contacts the 5S rRNA. Binds to the 5S rRNA independently of L5 and L18.

This is one of the proteins that binds to the 5S RNA in the ribosome where it forms part of the central protuberance. The protein is Large ribosomal subunit protein bL25 of Methylobacterium radiotolerans (strain ATCC 27329 / DSM 1819 / JCM 2831 / NBRC 15690 / NCIMB 10815 / 0-1).